We begin with the raw amino-acid sequence, 418 residues long: Alpha-tubulin N-acetyltransferase 1 (418 aa).

One can recognise an N-acetyltransferase domain in the interval 1-186 (MEFEFDVHKI…NNFVVFEGFF (186 aa)). Acetyl-CoA is bound by residues 120–133 (FYIH…GFGK) and 156–165 (SEKFLSFLRK). 2 disordered regions span residues 237–292 (SSLG…MNLS) and 322–353 (QIKE…HQND). The span at 277–287 (QEDHSQRRRTS) shows a compositional bias: basic and acidic residues. Polar residues predominate over residues 329–353 (RTDSSAQEGRTQDRPNGSNSQHQND).

This sequence belongs to the acetyltransferase ATAT1 family.

The protein localises to the cytoplasm. It is found in the membrane. The protein resides in the clathrin-coated pit. It localises to the cell junction. Its subcellular location is the focal adhesion. The protein localises to the cell projection. It is found in the axon. The protein resides in the cytoskeleton. It localises to the spindle. It carries out the reaction L-lysyl-[alpha-tubulin] + acetyl-CoA = N(6)-acetyl-L-lysyl-[alpha-tubulin] + CoA + H(+). Its function is as follows. Specifically acetylates 'Lys-40' in alpha-tubulin on the lumenal side of microtubules. Promotes microtubule destabilization and accelerates microtubule dynamics; this activity may be independent of acetylation activity. Acetylates alpha-tubulin with a slow enzymatic rate, due to a catalytic site that is not optimized for acetyl transfer. Enters the microtubule through each end and diffuses quickly throughout the lumen of microtubules. Acetylates only long/old microtubules because of its slow acetylation rate since it does not have time to act on dynamically unstable microtubules before the enzyme is released. May be involved in neuron development. This Xenopus laevis (African clawed frog) protein is Alpha-tubulin N-acetyltransferase 1.